The sequence spans 235 residues: Large ribosomal subunit protein uL1 (235 aa).

This sequence belongs to the universal ribosomal protein uL1 family. As to quaternary structure, part of the 50S ribosomal subunit.

Functionally, binds directly to 23S rRNA. The L1 stalk is quite mobile in the ribosome, and is involved in E site tRNA release. Its function is as follows. Protein L1 is also a translational repressor protein, it controls the translation of the L11 operon by binding to its mRNA. The protein is Large ribosomal subunit protein uL1 of Prochlorococcus marinus subsp. pastoris (strain CCMP1986 / NIES-2087 / MED4).